The sequence spans 512 residues: Calcium-dependent protein kinase 18 (512 aa).

The disordered stretch occupies residues 1-25 (MGLCSSSSARRDAGTPGGGNGAGNK). Glycine 2 carries N-myristoyl glycine lipidation. Residues 52–312 (YALGKLLGHG…AAQALSHEWV (261 aa)) enclose the Protein kinase domain. Residues 58–66 (LGHGQFGYT) and lysine 81 each bind ATP. Aspartate 178 (proton acceptor) is an active-site residue. Positions 318–348 (ASDIPLDISVLHNMRQFVKYSRFKQFALRAL) are autoinhibitory domain. 4 EF-hand domains span residues 355–390 (EELS…DVPW), 392–427 (LKGP…VHQL), 434–469 (KWKS…KGSI), and 472–499 (LLEE…ASMS). Ca(2+)-binding residues include aspartate 368, aspartate 370, asparagine 372, threonine 374, glutamate 379, aspartate 405, asparagine 407, aspartate 409, glutamate 416, aspartate 447, aspartate 449, aspartate 451, tyrosine 453, glutamate 458, aspartate 477, aspartate 479, aspartate 481, lysine 483, and glutamate 488.

It belongs to the protein kinase superfamily. Ser/Thr protein kinase family. CDPK subfamily. As to quaternary structure, interacts with MPK5. Autophosphorylated. Phosphorylated by MPK5.

It is found in the cell membrane. The catalysed reaction is L-seryl-[protein] + ATP = O-phospho-L-seryl-[protein] + ADP + H(+). The enzyme catalyses L-threonyl-[protein] + ATP = O-phospho-L-threonyl-[protein] + ADP + H(+). With respect to regulation, activated by calcium. Autophosphorylation may play an important role in the regulation of the kinase activity. Its function is as follows. May play a role in signal transduction pathways that involve calcium as a second messenger. Functions upstream of MPK5 in a signaling pathway that represses defense gene expression and negatively regulates resistance to rice blast fungus. Phosphorylates MPK5 at Thr-14 and Thr-32 and activates MPK5 independently of MAP kinase kinase (MKK) phosphorylation. May be involved in arbuscular mycorrhizal presymbiotic phase signaling. Phosphorylates the elicitor-responsive protein ERG1 in vitro. Phosphorylation is calcium-dependent. This Oryza sativa subsp. japonica (Rice) protein is Calcium-dependent protein kinase 18.